The sequence spans 1124 residues: PAN2-PAN3 deadenylation complex catalytic subunit PAN2 (1124 aa).

WD repeat units follow at residues 19–58 (IDNS…IPMP), 118–157 (PGFN…TTSF), 158–195 (NHTG…TVKS), and 309–348 (SSNT…SKNF). The tract at residues 351-484 (FPSYLEQPDF…EYKLSNKFEV (134 aa)) is linker. Residues 484–861 (VPNCYSNLKI…KPIIVMYQLA (378 aa)) form the USP domain. The Exonuclease domain maps to 917–1091 (IAIDAEFVAL…EDANTALLLY (175 aa)). The a divalent metal cation site is built by aspartate 920, glutamate 922, aspartate 1030, and aspartate 1083.

This sequence belongs to the peptidase C19 family. PAN2 subfamily. In terms of assembly, forms a heterotrimer with an asymmetric homodimer of the regulatory subunit PAN3 to form the poly(A)-nuclease (PAN) deadenylation complex. Requires a divalent metal cation as cofactor.

The protein resides in the cytoplasm. The catalysed reaction is Exonucleolytic cleavage of poly(A) to 5'-AMP.. Positively regulated by the regulatory subunit PAN3. Functionally, catalytic subunit of the poly(A)-nuclease (PAN) deadenylation complex, one of two cytoplasmic mRNA deadenylases involved in mRNA turnover. PAN specifically shortens poly(A) tails of RNA and the activity is stimulated by poly(A)-binding protein PAB1. PAN deadenylation is followed by rapid degradation of the shortened mRNA tails by the CCR4-NOT complex. Deadenylated mRNAs are then degraded by two alternative mechanisms, namely exosome-mediated 3'-5' exonucleolytic degradation, or deadenylation-dependent mRNA decaping and subsequent 5'-3' exonucleolytic degradation by XRN1. May also be involved in post-transcriptional maturation of mRNA poly(A) tails. This Debaryomyces hansenii (strain ATCC 36239 / CBS 767 / BCRC 21394 / JCM 1990 / NBRC 0083 / IGC 2968) (Yeast) protein is PAN2-PAN3 deadenylation complex catalytic subunit PAN2.